A 155-amino-acid chain; its full sequence is Small ribosomal subunit protein uS7c (155 aa).

The protein belongs to the universal ribosomal protein uS7 family. Part of the 30S ribosomal subunit.

Its subcellular location is the plastid. The protein resides in the chloroplast. Its function is as follows. One of the primary rRNA binding proteins, it binds directly to 16S rRNA where it nucleates assembly of the head domain of the 30S subunit. The chain is Small ribosomal subunit protein uS7c (rps7) from Sagittaria latifolia (Broadleaf arrowhead).